A 134-amino-acid polypeptide reads, in one-letter code: Putative pre-16S rRNA nuclease (134 aa).

Belongs to the YqgF nuclease family.

Its subcellular location is the cytoplasm. Its function is as follows. Could be a nuclease involved in processing of the 5'-end of pre-16S rRNA. The protein is Putative pre-16S rRNA nuclease of Helicobacter pylori (strain HPAG1).